The primary structure comprises 103 residues: Cell division protein FtsB (103 aa).

At 1–3 (MGK) the chain is on the cytoplasmic side. A helical transmembrane segment spans residues 4–21 (LTLLLLAILVWLQYSLWF). Over 22 to 103 (GKNGIHDYTR…RAQSAGQNNR (82 aa)) the chain is Periplasmic. Residues 31–71 (RVNDDVAAQQATNAKLKARNDQLFAEIDDLNGGQEALEERA) are a coiled coil.

It belongs to the FtsB family. Part of a complex composed of FtsB, FtsL and FtsQ.

Its subcellular location is the cell inner membrane. Its function is as follows. Essential cell division protein. May link together the upstream cell division proteins, which are predominantly cytoplasmic, with the downstream cell division proteins, which are predominantly periplasmic. This chain is Cell division protein FtsB, found in Shigella boydii serotype 18 (strain CDC 3083-94 / BS512).